A 176-amino-acid polypeptide reads, in one-letter code: Adenine phosphoribosyltransferase (176 aa).

It belongs to the purine/pyrimidine phosphoribosyltransferase family. Homodimer.

Its subcellular location is the cytoplasm. The enzyme catalyses AMP + diphosphate = 5-phospho-alpha-D-ribose 1-diphosphate + adenine. It functions in the pathway purine metabolism; AMP biosynthesis via salvage pathway; AMP from adenine: step 1/1. Catalyzes a salvage reaction resulting in the formation of AMP, that is energically less costly than de novo synthesis. The protein is Adenine phosphoribosyltransferase of Borreliella afzelii (strain PKo) (Borrelia afzelii).